Here is a 370-residue protein sequence, read N- to C-terminus: Aminomethyltransferase (370 aa).

This sequence belongs to the GcvT family. As to quaternary structure, the glycine cleavage system is composed of four proteins: P, T, L and H.

The enzyme catalyses N(6)-[(R)-S(8)-aminomethyldihydrolipoyl]-L-lysyl-[protein] + (6S)-5,6,7,8-tetrahydrofolate = N(6)-[(R)-dihydrolipoyl]-L-lysyl-[protein] + (6R)-5,10-methylene-5,6,7,8-tetrahydrofolate + NH4(+). The glycine cleavage system catalyzes the degradation of glycine. This chain is Aminomethyltransferase, found in Stenotrophomonas maltophilia (strain K279a).